Reading from the N-terminus, the 197-residue chain is Dephospho-CoA kinase (197 aa).

The 194-residue stretch at Arg4–Ala197 folds into the DPCK domain. Gly12–Thr17 contributes to the ATP binding site.

This sequence belongs to the CoaE family.

It localises to the cytoplasm. It catalyses the reaction 3'-dephospho-CoA + ATP = ADP + CoA + H(+). It functions in the pathway cofactor biosynthesis; coenzyme A biosynthesis; CoA from (R)-pantothenate: step 5/5. Its function is as follows. Catalyzes the phosphorylation of the 3'-hydroxyl group of dephosphocoenzyme A to form coenzyme A. This Ruegeria pomeroyi (strain ATCC 700808 / DSM 15171 / DSS-3) (Silicibacter pomeroyi) protein is Dephospho-CoA kinase.